Consider the following 116-residue polypeptide: EDHPVHNLGEHSVCDSVSAWVTKTTATDIKGNTVTVMENVNLDNKVYKEYFFETKCKNPNPEPSGCRGIDSSHWNSYCTETDTFIKALTMEGNQASWRFIRIDTACVCVITKKTGN.

Cystine bridges form between cysteine 14–cysteine 78, cysteine 56–cysteine 106, and cysteine 66–cysteine 108.

This sequence belongs to the NGF-beta family. As to quaternary structure, homodimer; non-covalently linked. Post-translationally, not glycosylated. In terms of tissue distribution, expressed by the venom gland.

It localises to the secreted. In terms of biological role, nerve growth factor is important for the development and maintenance of the sympathetic and sensory nervous systems. It stimulates division and differentiation of sympathetic and embryonic sensory neurons as well as basal forebrain cholinergic neurons in the brain. Its relevance in the snake venom is not clear. However, it has been shown to inhibit metalloproteinase-dependent proteolysis of platelet glycoprotein Ib alpha, suggesting a metalloproteinase inhibition to prevent metalloprotease autodigestion and/or protection against prey proteases. Binds a lipid between the two protein chains in the homodimer. The lipid-bound form promotes histamine relase from mouse mast cells, contrary to the lipid-free form. In Naja naja (Indian cobra), this protein is Venom nerve growth factor.